A 368-amino-acid chain; its full sequence is MKGVKAEDVHHFLLNTEDLRHRRVSRMVEEVQKILLQVTSDISNRDSRFHCISNAGIHSDSLKVLSPSQFLVTVPLRGLSGFRQKKTRRWRYYSPSGTQLLAPAMEPEKLHQWLEIEQFQKSTPHWHDNDVNIKGDLVPARIIHVFLEHLYRAITFCSLSDKVNVLESYGPSIRLNVETSEQMVEVELVPVVEVPGYWPKKSQWPRFFKRWPLRERVQCVKSFGFDLLARSNYHWQLSFLRGERLLLEAMDDDGGCRMKCYRAVRQMKEDVWCPGNHPVINSQHLQMIFLWASERHPSAKAWKDLGRCFLRIVRRLQKCARQRFLRHYFVRRANLLKYADTAQLDALADKLSRFLQNPSLGQGASSVC.

The protein belongs to the mab-21 family.

The chain is Protein mab-21-like 3 (mab21L3) from Xenopus laevis (African clawed frog).